Here is a 321-residue protein sequence, read N- to C-terminus: Aspartate carbamoyltransferase catalytic subunit (321 aa).

Positions 65 and 66 each coordinate carbamoyl phosphate. Lysine 93 serves as a coordination point for L-aspartate. Carbamoyl phosphate-binding residues include arginine 115, histidine 143, and glutamine 146. Arginine 176 and arginine 230 together coordinate L-aspartate. Carbamoyl phosphate-binding residues include glycine 271 and proline 272.

Belongs to the aspartate/ornithine carbamoyltransferase superfamily. ATCase family. As to quaternary structure, heterododecamer (2C3:3R2) of six catalytic PyrB chains organized as two trimers (C3), and six regulatory PyrI chains organized as three dimers (R2).

It catalyses the reaction carbamoyl phosphate + L-aspartate = N-carbamoyl-L-aspartate + phosphate + H(+). Its pathway is pyrimidine metabolism; UMP biosynthesis via de novo pathway; (S)-dihydroorotate from bicarbonate: step 2/3. Functionally, catalyzes the condensation of carbamoyl phosphate and aspartate to form carbamoyl aspartate and inorganic phosphate, the committed step in the de novo pyrimidine nucleotide biosynthesis pathway. The polypeptide is Aspartate carbamoyltransferase catalytic subunit (Bartonella tribocorum (strain CIP 105476 / IBS 506)).